Reading from the N-terminus, the 130-residue chain is Large ribosomal subunit protein bL20 (130 aa).

Belongs to the bacterial ribosomal protein bL20 family.

In terms of biological role, binds directly to 23S ribosomal RNA and is necessary for the in vitro assembly process of the 50S ribosomal subunit. It is not involved in the protein synthesizing functions of that subunit. In Clavibacter sepedonicus (Clavibacter michiganensis subsp. sepedonicus), this protein is Large ribosomal subunit protein bL20.